Here is a 147-residue protein sequence, read N- to C-terminus: Protegrin-2 (147 aa).

The first 29 residues, M1 to A29, serve as a signal peptide directing secretion. Positions Q30–V130 are excised as a propeptide. The tract at residues D61–V80 is disordered. Disulfide bonds link C85-C96, C107-C124, C136-C145, and C138-C143. A Valine amide modification is found at V146.

It belongs to the cathelicidin family.

Its subcellular location is the secreted. Microbicidal activity. Active against E.coli, Listeria monocytogenes and C.albicans, in vitro. The protein is Protegrin-2 (NPG2) of Sus scrofa (Pig).